Here is a 46-residue protein sequence, read N- to C-terminus: Protein YpdJ (46 aa).

May be involved in H(2) production during fermentative growth. The polypeptide is Protein YpdJ (ypdJ) (Escherichia coli (strain K12)).